We begin with the raw amino-acid sequence, 657 residues long: Glycogen debranching enzyme (657 aa).

Catalysis depends on D336, which acts as the Nucleophile. Catalysis depends on E371, which acts as the Proton donor. A disordered region spans residues 460–479 (ANGEENRDGTNNNYSNNHGK).

This sequence belongs to the glycosyl hydrolase 13 family.

The catalysed reaction is Hydrolysis of (1-&gt;6)-alpha-D-glucosidic linkages to branches with degrees of polymerization of three or four glucose residues in limit dextrin.. The protein operates within glycan degradation; glycogen degradation. Removes maltotriose and maltotetraose chains that are attached by 1,6-alpha-linkage to the limit dextrin main chain, generating a debranched limit dextrin. This is Glycogen debranching enzyme from Escherichia coli O6:K15:H31 (strain 536 / UPEC).